A 275-amino-acid chain; its full sequence is MAIHLYKTSTPSTRNGTVDSRQVKSNPRNHLIYGQHRCGKGRNARGIITAGHRGGGHKRLYRQIDFRRNEKNIYGRIVTIEYDPNRNASICLIHYGDGEKKYILHPRGAIIGDTIVSGTEVPIKMGNALPLTDMPLGTAIHNIEITLGKGGQLARAAGAVAKLIAKEGKSATLKLPSGEVRLISKNCSATVGQVGNVGVNQKNLGRAGSKCWLGKRPIVRGVVMNPVDHPHGGGEGRAPIGRKKPATPWGFPALGRRSRKRKKYSDNLILRRRTK.

Disordered regions lie at residues 1-26 (MAIHLYKTSTPSTRNGTVDSRQVKSN) and 224-275 (MNPV…RRTK). Positions 7–26 (KTSTPSTRNGTVDSRQVKSN) are enriched in polar residues.

This sequence belongs to the universal ribosomal protein uL2 family. Part of the 50S ribosomal subunit.

Its subcellular location is the plastid. It localises to the chloroplast. In Phaseolus angularis (Azuki bean), this protein is Large ribosomal subunit protein uL2cz/uL2cy (rpl2-A).